Here is a 433-residue protein sequence, read N- to C-terminus: Homogentisate 1,2-dioxygenase (433 aa).

The active-site Proton acceptor is the His288. Fe cation-binding residues include His331 and Glu337. Residues Tyr346 and His367 each contribute to the homogentisate site. His367 is a binding site for Fe cation.

This sequence belongs to the homogentisate dioxygenase family. As to quaternary structure, hexamer; dimer of trimers. Requires Fe cation as cofactor.

It carries out the reaction homogentisate + O2 = 4-maleylacetoacetate + H(+). The protein operates within amino-acid degradation; L-phenylalanine degradation; acetoacetate and fumarate from L-phenylalanine: step 4/6. Involved in the catabolism of homogentisate (2,5-dihydroxyphenylacetate or 2,5-OH-PhAc), a central intermediate in the degradation of phenylalanine and tyrosine. Catalyzes the oxidative ring cleavage of the aromatic ring of homogentisate to yield maleylacetoacetate. This Pseudomonas putida (strain ATCC 700007 / DSM 6899 / JCM 31910 / BCRC 17059 / LMG 24140 / F1) protein is Homogentisate 1,2-dioxygenase.